A 560-amino-acid polypeptide reads, in one-letter code: Membrane protein insertase YidC (560 aa).

A run of 6 helical transmembrane segments spans residues 5 to 25 (IINL…WQYF), 334 to 354 (AIDF…MNFF), 357 to 377 (YVGN…LLMF), 431 to 451 (LPIL…YVTI), 476 to 496 (LFGL…WPIL), and 522 to 542 (FMPL…LIYW).

This sequence belongs to the OXA1/ALB3/YidC family. Type 1 subfamily. As to quaternary structure, interacts with the Sec translocase complex via SecD. Specifically interacts with transmembrane segments of nascent integral membrane proteins during membrane integration.

Its subcellular location is the cell inner membrane. Functionally, required for the insertion and/or proper folding and/or complex formation of integral membrane proteins into the membrane. Involved in integration of membrane proteins that insert both dependently and independently of the Sec translocase complex, as well as at least some lipoproteins. Aids folding of multispanning membrane proteins. In Rickettsia massiliae (strain Mtu5), this protein is Membrane protein insertase YidC.